The primary structure comprises 248 residues: Probable phosphatase VS_II0429 (248 aa).

The Zn(2+) site is built by His-8, His-10, His-16, His-41, Glu-74, His-102, His-132, Asp-194, and His-196.

Belongs to the PHP family. It depends on Zn(2+) as a cofactor.

The chain is Probable phosphatase VS_II0429 from Vibrio atlanticus (strain LGP32) (Vibrio splendidus (strain Mel32)).